Reading from the N-terminus, the 1730-residue chain is Nebulin-related-anchoring protein (1730 aa).

The region spanning 4–64 (QPCSRCGYGV…HAHNPKNNTF (61 aa)) is the LIM zinc-binding domain. Nebulin repeat units lie at residues 63–97 (TFTS…QCKS), 156–166 (EYTEDYEQPRG), 175–202 (TPAY…ERIS), 203–237 (RFST…QQRG), 246–273 (TPAY…KEMR), 298–307 (YPEEYEEHRG), 316–343 (TPAY…KMKG), 348–382 (HSLP…SSRG), 389–417 (ETPQ…NHMR), 419–453 (RYEG…HDIV), 487–521 (KYSS…KNKL), 522–556 (NYTL…KTKG), 558–592 (GFEM…KTKG), 602–626 (LLHS…ESKT), 627–661 (RFHL…EYTV), 662–692 (LPED…WMKG), 702–724 (NLEQ…RVDE), 726–760 (KFTS…QSVH), 761–795 (QYTI…NQKA), 797–831 (GFEL…RSRG), 844–869 (QMSH…DTKS), 870–896 (QCHV…VGYK), 901–935 (HFTA…WMKG), 945–963 (NVEQ…KYRQ), 969–1003 (KFTS…NIKH), 1004–1038 (HYTP…KLRD), 1040–1074 (GYKL…KMKG), 1078–1112 (GSRS…HSKA), 1113–1139 (QFHL…QDYK), 1144–1178 (QYTS…FMRG), 1183–1206 (IPGT…KYRQ), 1212–1246 (KYTA…DARH), 1247–1281 (EYTM…NLRA), 1283–1317 (GYKL…KERG), 1321–1355 (GPQS…SSQA), 1356–1390 (QFHL…KFTA), 1391–1421 (LPED…GMKG), 1429–1449 (SPQM…KYRK), 1455–1481 (KFTT…RMYR), 1490–1524 (RYTL…QTRA), 1526–1560 (SYDF…RDRG), 1564–1598 (GYRS…KSRS), 1599–1626 (QFHS…HYRQ), and 1640–1664 (LRHA…LTRG). Phosphoserine is present on Ser-1081. Residues 1595 to 1620 (KSRSQFHSSTDQPGLLQAKRSQQLAS) are disordered. The segment covering 1596–1606 (SRSQFHSSTDQ) has biased composition (polar residues).

As to quaternary structure, interacts with actin, alpha-actinin, KLHL41, TLN1 and VCL. Interacts with CSRP3. As to expression, expressed in cardiac and skeletal muscle.

May be involved in anchoring the terminal actin filaments in the myofibril to the membrane and in transmitting tension from the myofibrils to the extracellular matrix. The sequence is that of Nebulin-related-anchoring protein from Homo sapiens (Human).